Consider the following 578-residue polypeptide: MAETSKQVNGDDAQDLHSLLSSPARDFLVRNDGEQVKVDSLLGKKIGLYFSAAWCGPCQRFTPQLVEVYNELSSKVGFEIVFVSGDEDEESFGDYFRKMPWLAVPFTDSETRDRLDELFKVRGIPNLVMVDDHGKLVNENGVGVIRSYGADAYPFTPEKMKEIKEDEDRARRGQTLRSVLVTPSRDFVISPDGNKVPVSELEGKTIGLLFSVASYRKCTELTPKLVEFYTKLKENKEDFEIVLISLEDDEESFNQDFKTKPWLALPFNDKSGSKLARHFMLSTLPTLVILGPDGKTRHSNVAEAIDDYGVLAYPFTPEKFQELKELEKAKVEAQTLESLLVSGDLNYVLGKDGAKVLVSDLVGKTILMYFSAHWCPPCRAFTPKLVEVYKQIKERNEAFELIFISSDRDQESFDEYYSQMPWLALPFGDPRKASLAKTFKVGGIPMLAALGPTGQTVTKEARDLVVAHGADAYPFTEERLKEIEAKYDEIAKDWPKKVKHVLHEEHELELTRVQVYTCDKCEEEGTIWSYHCDECDFDLHAKCALNEDTKENGDEAVKVGGDESKDGWVCEGNVCTKA.

Thioredoxin domains follow at residues 18-172 (SLLS…RARR), 178-321 (SVLV…EKFQ), and 325-485 (ELEK…EIEA).

It belongs to the nucleoredoxin family.

The enzyme catalyses [protein]-dithiol + NAD(+) = [protein]-disulfide + NADH + H(+). The catalysed reaction is [protein]-dithiol + NADP(+) = [protein]-disulfide + NADPH + H(+). In terms of biological role, probable thiol-disulfide oxidoreductase required for pollen tube growth and pollen function in the pistil. Seems not to be required for in vitro pollen tube growth. May be involved in the generation of lipid signaling molecules in pistil. The chain is Probable nucleoredoxin 1 from Arabidopsis thaliana (Mouse-ear cress).